The following is a 263-amino-acid chain: MINAAVLGACGRMGSLIIENITCSTDMQLVAAFDIGNIGKDAGEFAHVGNLGIQISDVKDLETVLKKTQADVLIDFTAAGATIVNAPIAAGCGVNLIIGTTGITSEQRAVIEEAIRKNQVRAVISPNYSVGVNVFFKIVREAAKYLADYDIEIIEAHHNQKKDAPSGTALRAADVISEALGGKEYVYGREGIAPRGKEIGIHAVRGGDITGDHTVLFVGNSERVEIHHMAHSRQIFAKGAVRAAEWICGQEPGIYSMDDVLGL.

NAD(+) contacts are provided by residues 8–13 (GACGRM), Asp34, 99–101 (GTT), and 125–128 (SPNY). His157 (proton donor/acceptor) is an active-site residue. His158 contacts (S)-2,3,4,5-tetrahydrodipicolinate. Lys161 serves as the catalytic Proton donor. 167 to 168 (GT) serves as a coordination point for (S)-2,3,4,5-tetrahydrodipicolinate.

The protein belongs to the DapB family.

The protein resides in the cytoplasm. The catalysed reaction is (S)-2,3,4,5-tetrahydrodipicolinate + NAD(+) + H2O = (2S,4S)-4-hydroxy-2,3,4,5-tetrahydrodipicolinate + NADH + H(+). The enzyme catalyses (S)-2,3,4,5-tetrahydrodipicolinate + NADP(+) + H2O = (2S,4S)-4-hydroxy-2,3,4,5-tetrahydrodipicolinate + NADPH + H(+). It functions in the pathway amino-acid biosynthesis; L-lysine biosynthesis via DAP pathway; (S)-tetrahydrodipicolinate from L-aspartate: step 4/4. Its function is as follows. Catalyzes the conversion of 4-hydroxy-tetrahydrodipicolinate (HTPA) to tetrahydrodipicolinate. In Methanosarcina mazei (strain ATCC BAA-159 / DSM 3647 / Goe1 / Go1 / JCM 11833 / OCM 88) (Methanosarcina frisia), this protein is 4-hydroxy-tetrahydrodipicolinate reductase.